A 424-amino-acid polypeptide reads, in one-letter code: Gamma-glutamyl phosphate reductase (424 aa).

Belongs to the gamma-glutamyl phosphate reductase family.

Its subcellular location is the cytoplasm. It carries out the reaction L-glutamate 5-semialdehyde + phosphate + NADP(+) = L-glutamyl 5-phosphate + NADPH + H(+). The protein operates within amino-acid biosynthesis; L-proline biosynthesis; L-glutamate 5-semialdehyde from L-glutamate: step 2/2. Functionally, catalyzes the NADPH-dependent reduction of L-glutamate 5-phosphate into L-glutamate 5-semialdehyde and phosphate. The product spontaneously undergoes cyclization to form 1-pyrroline-5-carboxylate. In Dehalococcoides mccartyi (strain ATCC BAA-2266 / KCTC 15142 / 195) (Dehalococcoides ethenogenes (strain 195)), this protein is Gamma-glutamyl phosphate reductase.